The chain runs to 311 residues: MFTIKIPATSANLGPGFDSLGLSLQLYNKFTFKRLKSSDIRIKIKEVDTGNIIELPIKDNLIYRAMMYLFERYDVRPEGIELMEEVAIPFARGLGSSATAILGGLFGANIMLGEPLEDEELLKIAVKLEKHPDNVVPALKGGFVINVLKGSDLYYKKINPGEQLRVILCIPEFQLKTEDLRQVLPRQIEFKDAVFNHSRTAFLTSCFYERDWESLRVAMQDRLHQDYRSSLIPGFDEVVKSAYDNGAVGVALSGAGPTVISFAKDKGDKIGEAMVKAFGHYNINSKYIETGLDNKGLILKGHKFSLSGGSR.

89–99 (PFARGLGSSAT) serves as a coordination point for ATP.

It belongs to the GHMP kinase family. Homoserine kinase subfamily.

It is found in the cytoplasm. It carries out the reaction L-homoserine + ATP = O-phospho-L-homoserine + ADP + H(+). The protein operates within amino-acid biosynthesis; L-threonine biosynthesis; L-threonine from L-aspartate: step 4/5. In terms of biological role, catalyzes the ATP-dependent phosphorylation of L-homoserine to L-homoserine phosphate. This Halothermothrix orenii (strain H 168 / OCM 544 / DSM 9562) protein is Homoserine kinase.